Reading from the N-terminus, the 437-residue chain is UDP-N-acetylmuramate--L-alanine ligase (437 aa).

114-120 is an ATP binding site; the sequence is GTHGKTS.

This sequence belongs to the MurCDEF family.

It is found in the cytoplasm. The catalysed reaction is UDP-N-acetyl-alpha-D-muramate + L-alanine + ATP = UDP-N-acetyl-alpha-D-muramoyl-L-alanine + ADP + phosphate + H(+). It functions in the pathway cell wall biogenesis; peptidoglycan biosynthesis. Its function is as follows. Cell wall formation. The polypeptide is UDP-N-acetylmuramate--L-alanine ligase (Lactobacillus johnsonii (strain CNCM I-12250 / La1 / NCC 533)).